The sequence spans 169 residues: ATP synthase subunit b (169 aa).

A helical membrane pass occupies residues 12 to 32; that stretch reads HIYLGNAIWYLLCFAILMLLI.

Belongs to the ATPase B chain family. As to quaternary structure, F-type ATPases have 2 components, F(1) - the catalytic core - and F(0) - the membrane proton channel. F(1) has five subunits: alpha(3), beta(3), gamma(1), delta(1), epsilon(1). F(0) has three main subunits: a(1), b(2) and c(10-14). The alpha and beta chains form an alternating ring which encloses part of the gamma chain. F(1) is attached to F(0) by a central stalk formed by the gamma and epsilon chains, while a peripheral stalk is formed by the delta and b chains.

It is found in the cell membrane. Its activity is regulated as follows. Increases 2-fold following exposure to low pH. Its function is as follows. F(1)F(0) ATP synthase produces ATP from ADP in the presence of a proton or sodium gradient. F-type ATPases consist of two structural domains, F(1) containing the extramembraneous catalytic core and F(0) containing the membrane proton channel, linked together by a central stalk and a peripheral stalk. During catalysis, ATP synthesis in the catalytic domain of F(1) is coupled via a rotary mechanism of the central stalk subunits to proton translocation. In terms of biological role, component of the F(0) channel, it forms part of the peripheral stalk, linking F(1) to F(0). The polypeptide is ATP synthase subunit b (Lactobacillus acidophilus (strain ATCC 700396 / NCK56 / N2 / NCFM)).